Consider the following 823-residue polypeptide: Leucine--tRNA ligase (823 aa).

Positions 42–52 match the 'HIGH' region motif; sequence PYPSGTLHMGH. A 'KMSKS' region motif is present at residues 575 to 579; that stretch reads KMSKS. K578 is a binding site for ATP.

Belongs to the class-I aminoacyl-tRNA synthetase family.

It is found in the cytoplasm. It catalyses the reaction tRNA(Leu) + L-leucine + ATP = L-leucyl-tRNA(Leu) + AMP + diphosphate. The protein is Leucine--tRNA ligase of Legionella pneumophila subsp. pneumophila (strain Philadelphia 1 / ATCC 33152 / DSM 7513).